Here is an 856-residue protein sequence, read N- to C-terminus: V-type proton ATPase 116 kDa subunit a 2 (856 aa).

Residues 1–393 (MGSLFRSETM…DAYGVGSYRE (393 aa)) are Cytoplasmic-facing. A helical transmembrane segment spans residues 394 to 412 (VNPALFTIITFPFLFAVMF). Residues 413–414 (GD) lie on the Vacuolar side of the membrane. The chain crosses the membrane as a helical span at residues 415–431 (FGHGFVMFLFALLLVLN). At 432-445 (ENHPRLNQSQEIMR) the chain is on the cytoplasmic side. Residues 446 to 475 (MFFNGRYILLLMGLFSVYTGLIYNDCFSKS) form a helical membrane-spanning segment. Residues 476–549 (VNLFGSGWNV…ATNRLTFLNS (74 aa)) are Vacuolar-facing. N-linked (GlcNAc...) asparagine glycans are attached at residues Asn484 and Asn505. A helical transmembrane segment spans residues 550-569 (FKMKMSVILGIIHMTFGVIL). Over 570-587 (GIFNHLHFRKKFNIYLVS) the chain is Cytoplasmic. Residues 588-608 (IPELLFMLCIFGYLIFMIFYK) traverse the membrane as a helical segment. Residues 609–651 (WLVFSAETSRVAPSILIEFINMFLFPASKTSGLYTGQEYVQRV) are Vacuolar-facing. The helical transmembrane segment at 652–671 (LLVVTALSVPVLFLGKPLFL) threads the bilayer. The Cytoplasmic segment spans residues 672-739 (LWLHNGRSCF…EILMTQVIHS (68 aa)). Phosphoserine occurs at positions 695 and 700. Residues 740–764 (IEYCLGCISNTASYLRLWALSLAHA) form a helical membrane-spanning segment. The Vacuolar portion of the chain corresponds to 765–785 (QLSDVLWAMLMRVGLRVDTTY). Residues 786–824 (GVLLLLPVIALFAVLTIFILLIMEGLSAFLHAIRLHWVE) form a helical membrane-spanning segment. Over 825–856 (FQNKFYVGAGTKFVPFSFSLLSSKFNNDDSVA) the chain is Cytoplasmic.

Belongs to the V-ATPase 116 kDa subunit family. V-ATPase is a heteromultimeric enzyme made up of two complexes: the ATP-hydrolytic V1 complex and the proton translocation V0 complex. The V1 complex consists of three catalytic AB heterodimers that form a heterohexamer, three peripheral stalks each consisting of EG heterodimers, one central rotor including subunits D and F, and the regulatory subunits C and H. The proton translocation complex V0 consists of the proton transport subunit a, a ring of proteolipid subunits c9c'', rotary subunit d, subunits e and f, and the accessory subunits ATP6AP1/Ac45 and ATP6AP2/PRR. Directly interacts with PSCD2 through its N-terminal cytosolic tail in an intra-endosomal acidification-dependent manner. Disruption of this interaction results in the inhibition of endocytosis. Interacts with SPAAR.

The protein localises to the cell membrane. It localises to the endosome membrane. Functionally, subunit of the V0 complex of vacuolar(H+)-ATPase (V-ATPase), a multisubunit enzyme composed of a peripheral complex (V1) that hydrolyzes ATP and a membrane integral complex (V0) that translocates protons. V-ATPase is responsible for acidifying and maintaining the pH of intracellular compartments and in some cell types, is targeted to the plasma membrane, where it is responsible for acidifying the extracellular environment. Essential component of the endosomal pH-sensing machinery. May play a role in maintaining the Golgi functions, such as glycosylation maturation, by controlling the Golgi pH. In aerobic conditions, involved in intracellular iron homeostasis, thus triggering the activity of Fe(2+) prolyl hydroxylase (PHD) enzymes, and leading to HIF1A hydroxylation and subsequent proteasomal degradation. This is V-type proton ATPase 116 kDa subunit a 2 (ATP6V0A2) from Homo sapiens (Human).